A 296-amino-acid polypeptide reads, in one-letter code: Protoheme IX farnesyltransferase (296 aa).

The next 9 membrane-spanning stretches (helical) occupy residues 14-34 (IIFGNLISVVGGFLLASKGVI), 36-56 (YPLFLATLFGVSLVVASGCVF), 75-95 (VLVKGLIDPKVSLIYASILGI), 99-119 (LLLYVGANPLAMWLAVIGFVI), 133-153 (VYGTLIGSLSGAAPPVIGYCA), 163-183 (LILLLIFSLWQMPHSYAIAIF), 209-229 (ITLYILAFMVATLMLTLSGYA), 234-254 (LVVAAAVSVWWLGMALRGYKA), and 265-285 (FVFSIIAITSLSVMMSVDFNV).

This sequence belongs to the UbiA prenyltransferase family. Protoheme IX farnesyltransferase subfamily.

The protein resides in the cell inner membrane. The enzyme catalyses heme b + (2E,6E)-farnesyl diphosphate + H2O = Fe(II)-heme o + diphosphate. The protein operates within porphyrin-containing compound metabolism; heme O biosynthesis; heme O from protoheme: step 1/1. Its function is as follows. Converts heme B (protoheme IX) to heme O by substitution of the vinyl group on carbon 2 of heme B porphyrin ring with a hydroxyethyl farnesyl side group. This chain is Protoheme IX farnesyltransferase, found in Yersinia enterocolitica serotype O:8 / biotype 1B (strain NCTC 13174 / 8081).